A 428-amino-acid polypeptide reads, in one-letter code: C4-dicarboxylate transport protein (428 aa).

8 consecutive transmembrane segments (helical) span residues 8–28 (SLYF…HFYP), 44–64 (LIKM…IAGM), 76–96 (VALL…LIIV), 142–162 (IGAF…LFGF), 184–204 (VIFG…FGAM), 222–242 (LIIC…GSIA), 326–346 (IVHQ…AAGV), and 352–372 (IVLA…LALI).

Belongs to the dicarboxylate/amino acid:cation symporter (DAACS) (TC 2.A.23) family.

The protein resides in the cell inner membrane. Its function is as follows. Responsible for the transport of dicarboxylates such as succinate, fumarate, and malate from the periplasm across the membrane. This is C4-dicarboxylate transport protein from Escherichia coli O127:H6 (strain E2348/69 / EPEC).